The sequence spans 370 residues: Neutral protease 2 homolog AFUA_4G13750 (370 aa).

The signal sequence occupies residues 1–19 (MKVTILASAILALINGALA). Residues 20-172 (LPANTPTLDV…PQAIKLLDRR (153 aa)) constitute a propeptide that is removed on maturation. 2 disulfide bridges follow: C178–C250 and C257–C275. H300 serves as a coordination point for Zn(2+). E301 is a catalytic residue. 2 residues coordinate Zn(2+): H304 and D315.

It belongs to the peptidase M35 family. Zn(2+) is required as a cofactor.

Its subcellular location is the secreted. The catalysed reaction is Preferential cleavage of bonds with hydrophobic residues in P1'. Also 3-Asn-|-Gln-4 and 8-Gly-|-Ser-9 bonds in insulin B chain.. Functionally, secreted metalloproteinase that allows assimilation of proteinaceous substrates. Shows high activities on basic nuclear substrates such as histone and protamine. May be involved in virulence. The protein is Neutral protease 2 homolog AFUA_4G13750 of Aspergillus fumigatus (strain ATCC MYA-4609 / CBS 101355 / FGSC A1100 / Af293) (Neosartorya fumigata).